The chain runs to 184 residues: RNA 2',3'-cyclic phosphodiesterase (184 aa).

H40 acts as the Proton donor in catalysis. Short sequence motifs (HXTX) lie at residues 40 to 43 and 125 to 128; these read HITL. The active-site Proton acceptor is the H125.

It belongs to the 2H phosphoesterase superfamily. ThpR family.

The catalysed reaction is a 3'-end 2',3'-cyclophospho-ribonucleotide-RNA + H2O = a 3'-end 2'-phospho-ribonucleotide-RNA + H(+). Functionally, hydrolyzes RNA 2',3'-cyclic phosphodiester to an RNA 2'-phosphomonoester. In vitro, ligates 5' and 3' half-tRNA molecules with 2',3'-cyclic phosphate and 5'-hydroxyl termini, respectively, to the product containing the 2'-5' phosphodiester linkage. Ligase activity requires GTP, but GTP hydrolysis is not required for the reaction, which is reversible. Ligase activity is weak compared to the phosphodiesterase activity. The polypeptide is RNA 2',3'-cyclic phosphodiesterase (Pyrococcus furiosus (strain ATCC 43587 / DSM 3638 / JCM 8422 / Vc1)).